The sequence spans 308 residues: MGGKHVAVLLGGFSSERPVSLSSGNACALALEGEGYKVTRVDVGRDVAAVLDELRPDVAFNALHGPFGEDGTIQGILEYLAIPYTHSGVLASALAMDKAQAKKVAAAAGIPVAGERVMNRFDFTSEHPLQPPYVVKPVREGSSFGVVIVKEDQSHPPQILTSSEWPFGNQVMVERYIHGRELTCGVLDGEALGVTEVVPLGHNFYDYDAKYAAGGSKHVIPAGISPKIYQKIQTLAVMAHQAIGCRGVSRSDFRYDDRFSEDGEVIWLEVNTQPGMTPTSLVPEMAAHAGRSFGDLVSWMVEDASCLR.

One can recognise an ATP-grasp domain in the interval lysine 102–glutamate 302. Proline 128–threonine 183 lines the ATP pocket. Aspartate 252, glutamate 269, and asparagine 271 together coordinate Mg(2+).

This sequence belongs to the D-alanine--D-alanine ligase family. Mg(2+) is required as a cofactor. Mn(2+) serves as cofactor.

The protein localises to the cytoplasm. It catalyses the reaction 2 D-alanine + ATP = D-alanyl-D-alanine + ADP + phosphate + H(+). The protein operates within cell wall biogenesis; peptidoglycan biosynthesis. Cell wall formation. The polypeptide is D-alanine--D-alanine ligase (Agrobacterium fabrum (strain C58 / ATCC 33970) (Agrobacterium tumefaciens (strain C58))).